The chain runs to 182 residues: Oligoribonuclease (182 aa).

An Exonuclease domain is found at 8 to 171; it reads LIWIDLEMTG…DDIRESIKEL (164 aa). Tyr-129 is an active-site residue.

It belongs to the oligoribonuclease family.

The protein localises to the cytoplasm. In terms of biological role, 3'-to-5' exoribonuclease specific for small oligoribonucleotides. This is Oligoribonuclease from Haemophilus influenzae (strain PittGG).